The chain runs to 423 residues: Putative competence-damage inducible protein (423 aa).

It belongs to the CinA family.

The polypeptide is Putative competence-damage inducible protein (Streptococcus pyogenes serotype M2 (strain MGAS10270)).